A 202-amino-acid chain; its full sequence is UMP-CMP kinase 3 (202 aa).

ATP is bound at residue 24–29; it reads GSGKGT. The NMP stretch occupies residues 44-73; the sequence is SAGDLLRAEIKSGSENGTMIQNMIKEGKIV. A ribonucleoside 5'-phosphate contacts are provided by residues Arg50, 71–73, and 98–101; these read KIV and GFPR. Asn105 is a CMP binding site. The segment at 136–144 is LID; that stretch reads GRNQGREDD. Arg137 is an ATP binding site. A ribonucleoside 5'-phosphate contacts are provided by Arg141 and Arg152. Lys180 provides a ligand contact to ATP.

As to quaternary structure, monomer. Requires Mg(2+) as cofactor.

Its subcellular location is the cytoplasm. It localises to the nucleus. It carries out the reaction CMP + ATP = CDP + ADP. The enzyme catalyses dCMP + ATP = dCDP + ADP. The catalysed reaction is UMP + ATP = UDP + ADP. In terms of biological role, catalyzes the phosphorylation of pyrimidine nucleoside monophosphates at the expense of ATP. Plays an important role in de novo pyrimidine nucleotide biosynthesis. Has preference for UMP and CMP as phosphate acceptors. Does not act on dCMP and dUMP. The chain is UMP-CMP kinase 3 (UMK3) from Arabidopsis thaliana (Mouse-ear cress).